Consider the following 143-residue polypeptide: Ribonuclease P protein component 2 (143 aa).

It belongs to the eukaryotic/archaeal RNase P protein component 2 family. Consists of a catalytic RNA component and at least 4-5 protein subunits.

The protein resides in the cytoplasm. It catalyses the reaction Endonucleolytic cleavage of RNA, removing 5'-extranucleotides from tRNA precursor.. Functionally, part of ribonuclease P, a protein complex that generates mature tRNA molecules by cleaving their 5'-ends. The chain is Ribonuclease P protein component 2 from Saccharolobus islandicus (strain Y.N.15.51 / Yellowstone #2) (Sulfolobus islandicus).